Reading from the N-terminus, the 178-residue chain is uncharacterized protein (178 aa).

The protein resides in the mitochondrion. This is an uncharacterized protein from Paramecium tetraurelia.